Here is a 331-residue protein sequence, read N- to C-terminus: Protein RecA (331 aa).

66-73 provides a ligand contact to ATP; it reads GPESSGKT.

Belongs to the RecA family.

The protein localises to the cytoplasm. Functionally, can catalyze the hydrolysis of ATP in the presence of single-stranded DNA, the ATP-dependent uptake of single-stranded DNA by duplex DNA, and the ATP-dependent hybridization of homologous single-stranded DNAs. It interacts with LexA causing its activation and leading to its autocatalytic cleavage. This chain is Protein RecA, found in Acholeplasma laidlawii.